We begin with the raw amino-acid sequence, 248 residues long: Cyclin-Q (248 aa).

Met1 is modified (N-acetylmethionine). Residues 1–12 (MEAPEGGGGGPA) show a composition bias toward gly residues. Residues 1 to 21 (MEAPEGGGGGPAARGPEGQPA) form a disordered region.

This sequence belongs to the cyclin family. Cyclin-like FAM58 subfamily. Associates with CDK10 to promote its kinase activity. Interacts with SALL1.

Its function is as follows. Activating cyclin for the cyclin-associated kinase CDK10. The polypeptide is Cyclin-Q (Homo sapiens (Human)).